The chain runs to 156 residues: Transcription elongation factor GreA (156 aa).

Positions 46-66 (AEYHSAREKQSFIEGRIKELE) form a coiled coil.

The protein belongs to the GreA/GreB family.

Its function is as follows. Necessary for efficient RNA polymerase transcription elongation past template-encoded arresting sites. The arresting sites in DNA have the property of trapping a certain fraction of elongating RNA polymerases that pass through, resulting in locked ternary complexes. Cleavage of the nascent transcript by cleavage factors such as GreA or GreB allows the resumption of elongation from the new 3'terminus. GreA releases sequences of 2 to 3 nucleotides. This Ruegeria pomeroyi (strain ATCC 700808 / DSM 15171 / DSS-3) (Silicibacter pomeroyi) protein is Transcription elongation factor GreA.